A 345-amino-acid polypeptide reads, in one-letter code: C5a anaphylatoxin chemotactic receptor 1 (345 aa).

Residues 1–32 (MMVTVSYDYDYNSTFLPDGFVDNYVERLSFGD) are Extracellular-facing. Tyr-9 and Tyr-11 each carry sulfotyrosine. An N-linked (GlcNAc...) asparagine glycan is attached at Asn-12. Residues 33-59 (LVAVVIMVVVFLVGVPGNALVVWVTAC) traverse the membrane as a helical segment. Residues 60–64 (EARRH) lie on the Cytoplasmic side of the membrane. A helical transmembrane segment spans residues 65 to 88 (INAIWFLNLAAADLLSCLALPILL). Topologically, residues 89-105 (VSTVHLNHWYFGDTACK) are extracellular. A disulfide bridge links Cys-104 with Cys-183. The helical transmembrane segment at 106–127 (VLPSLILLNMYTSILLLATISA) threads the bilayer. Over 128-148 (DRLLLVLSPIWCQRFRGGCLA) the chain is Cytoplasmic. The helical transmembrane segment at 149–169 (WTACGLAWVLALLLSSPSFLY) threads the bilayer. Topologically, residues 170–195 (RRTHNEHFSFKVYCVTDYGRDISKER) are extracellular. Residues 196 to 221 (AVALVRLLVGFIVPLITLTACYTFLL) form a helical membrane-spanning segment. Residues 222–237 (LRTWSRKATRSAKTVK) lie on the Cytoplasmic side of the membrane. The helical transmembrane segment at 238–260 (VVVAVVSSFFVFWLPYQVTGILL) threads the bilayer. Topologically, residues 261 to 277 (AWHSPNSATYRNTKALD) are extracellular. A helical transmembrane segment spans residues 278 to 298 (AVCVAFAYINCCINPIIYVVA). Residues 299–345 (GHGFQGRLLKSLPSVLRNVLTEESLDKRHQSFARSTVDTMPQKSESV) are Cytoplasmic-facing. Residues Ser-309, Ser-312, Ser-322, Ser-329, and Ser-333 each carry the phosphoserine modification.

It belongs to the G-protein coupled receptor 1 family. In terms of assembly, homodimer. May also form higher-order oligomers. Interacts (when phosphorylated) with ARRB1 and ARRB2; the interaction is associated with internalization of C5aR. In terms of processing, sulfation plays a critical role in the association of C5aR with C5a, but no significant role in the ability of the receptor to transduce a signal and mobilize calcium in response to a small peptide agonist. Phosphorylated on serine residues in response to C5a binding, resulting in internalization of the receptor and short-term desensitization to C5a. As to expression, expressed strongly in macrophages and spleen. Weak expression detected in lung, liver, brain, heart and kidney.

It is found in the cell membrane. The protein localises to the cytoplasmic vesicle. Functionally, receptor for the chemotactic and inflammatory peptide anaphylatoxin C5a. The ligand interacts with at least two sites on the receptor: a high-affinity site on the extracellular N-terminus, and a second site in the transmembrane region which activates downstream signaling events. Receptor activation stimulates chemotaxis, granule enzyme release, intracellular calcium release and superoxide anion production. The polypeptide is C5a anaphylatoxin chemotactic receptor 1 (C5AR1) (Cavia porcellus (Guinea pig)).